Reading from the N-terminus, the 129-residue chain is Large ribosomal subunit protein bL17 (129 aa).

The protein belongs to the bacterial ribosomal protein bL17 family. Part of the 50S ribosomal subunit. Contacts protein L32.

This is Large ribosomal subunit protein bL17 from Actinobacillus succinogenes (strain ATCC 55618 / DSM 22257 / CCUG 43843 / 130Z).